The chain runs to 138 residues: HTH-type transcriptional regulator CueR (138 aa).

In terms of domain architecture, HTH merR-type spans 1–69 (MNISDVAKKT…LEECGELVNL (69 aa)). The H-T-H motif DNA-binding region spans 4–23 (SDVAKKTGLTSKAIRFYEEK). C112 and C120 together coordinate Cu(+).

In terms of assembly, homodimer.

The protein resides in the cytoplasm. Functionally, regulates the transcription of the copA and cuiD (cueO) genes. Detects cytoplasmic copper stress and activates transcription in response to increasing copper concentrations. This Salmonella typhimurium (strain LT2 / SGSC1412 / ATCC 700720) protein is HTH-type transcriptional regulator CueR (cueR).